Consider the following 225-residue polypeptide: Cytidylate kinase (225 aa).

11–19 (GPAAAGKST) contacts ATP.

Belongs to the cytidylate kinase family. Type 1 subfamily.

It localises to the cytoplasm. The catalysed reaction is CMP + ATP = CDP + ADP. It carries out the reaction dCMP + ATP = dCDP + ADP. This is Cytidylate kinase from Anoxybacillus flavithermus (strain DSM 21510 / WK1).